A 658-amino-acid polypeptide reads, in one-letter code: Threonine--tRNA ligase (658 aa).

Residues 1–61 (MSDVRVIIQR…KDGEEVEPVQ (61 aa)) enclose the TGS domain. Residues 259–554 (DHRKLGNELD…LLEHYAGAFP (296 aa)) form a catalytic region. 3 residues coordinate Zn(2+): C353, H404, and H531.

It belongs to the class-II aminoacyl-tRNA synthetase family. In terms of assembly, homodimer. Zn(2+) serves as cofactor.

The protein resides in the cytoplasm. The catalysed reaction is tRNA(Thr) + L-threonine + ATP = L-threonyl-tRNA(Thr) + AMP + diphosphate + H(+). Catalyzes the attachment of threonine to tRNA(Thr) in a two-step reaction: L-threonine is first activated by ATP to form Thr-AMP and then transferred to the acceptor end of tRNA(Thr). Also edits incorrectly charged L-seryl-tRNA(Thr). The protein is Threonine--tRNA ligase of Streptomyces avermitilis (strain ATCC 31267 / DSM 46492 / JCM 5070 / NBRC 14893 / NCIMB 12804 / NRRL 8165 / MA-4680).